Consider the following 208-residue polypeptide: FMN-dependent NADH:quinone oxidoreductase 2 (208 aa).

It belongs to the azoreductase type 1 family. As to quaternary structure, homodimer. The cofactor is FMN.

It catalyses the reaction 2 a quinone + NADH + H(+) = 2 a 1,4-benzosemiquinone + NAD(+). The enzyme catalyses N,N-dimethyl-1,4-phenylenediamine + anthranilate + 2 NAD(+) = 2-(4-dimethylaminophenyl)diazenylbenzoate + 2 NADH + 2 H(+). Functionally, quinone reductase that provides resistance to thiol-specific stress caused by electrophilic quinones. In terms of biological role, also exhibits azoreductase activity. Catalyzes the reductive cleavage of the azo bond in aromatic azo compounds to the corresponding amines. In Bacillus cereus (strain ATCC 10987 / NRS 248), this protein is FMN-dependent NADH:quinone oxidoreductase 2.